A 330-amino-acid polypeptide reads, in one-letter code: Short chain dehydrogenase macD (330 aa).

Residues Lys-57, Asp-86, Asn-113, Tyr-204, and Lys-208 each contribute to the NADP(+) site. Residue Tyr-204 is the Proton donor of the active site. The active-site Lowers pKa of active site Tyr is Lys-208.

The protein belongs to the short-chain dehydrogenases/reductases (SDR) family.

Its pathway is secondary metabolite biosynthesis; terpenoid biosynthesis. Its function is as follows. Short chain dehydrogenase; part of the gene cluster that mediates the biosynthesis of macrophorins, isoprenoid epoxycyclohexenones containing cyclized drimane moieties. The first step of the pathway is the synthesis of 6-methylsalicylic acid (6-MSA) by the polyketide synthase macA. 6-MSA is then converted to m-cresol by the decarboxylase macB. The cytochrome P450 monooxygenase macC then catalyzes the oxidation of m-cresol to toluquinol. Epoxidation of toluquinol is then performed by the short chain dehydrogenase macD, with the help of macE, and a further prenylation by macG leads to 7-deacetoxyyanuthone A. The next step is the hydroxylation of C-22 of 7-deacetoxyyanuthone A by the cytochrome P450 monooxygenase macH to yield 22-deacetylyanuthone A. O-Mevalon transferase macI then attaches mevalon to the hydroxyl group of 22-deacetylyanuthone A to produce yanuthone E. The terpene cyclase macJ catalyzes the cyclization of 22-deacetylyanuthone A to macrophorin A. MacJ is also able to catalyze cyclization of yanuthone E and 7-deacetoxyyanuthone A to their corresponding macrophorins. The macJ products can be further modified by macH and macJ, as well as by the FAD-dependent monooxygenase macF, to produce additional macrophorins, including 4'-oxomacrophorin A, 4'-oxomacrophorin D and 4'-oxomacrophorin E. This is Short chain dehydrogenase macD from Penicillium terrestre.